The primary structure comprises 168 residues: uncharacterized protein (168 aa).

Residues 1-21 form the signal peptide; the sequence is MVYEVLAVVSGGLLGFGVTWA.

This is an uncharacterized protein from Archaeoglobus fulgidus (strain ATCC 49558 / DSM 4304 / JCM 9628 / NBRC 100126 / VC-16).